A 444-amino-acid polypeptide reads, in one-letter code: P2X purinoceptor 5 (444 aa).

Over 1-30 (MGQAGCKGLCLSLFDYKTEKYVIAKNKKVG) the chain is Cytoplasmic. Residues 31–51 (LLYRLLQASILAYLVVWVFLI) form a helical membrane-spanning segment. Over 52-319 (KKGYQDVDTS…RTLMKAYGIR (268 aa)) the chain is Extracellular. Residue Asn77 is glycosylated (N-linked (GlcNAc...) asparagine). 3 disulfide bridges follow: Cys118/Cys169, Cys129/Cys152, and Cys135/Cys163. Asn202 carries an N-linked (GlcNAc...) asparagine glycan. 2 disulfide bridges follow: Cys220–Cys229 and Cys263–Cys272. The helical transmembrane segment at 320-362 (FDVMVNGKAGKFSIIPTIINVGSGVALMGAGAFFCDLVLIYLI) threads the bilayer. Residues 363 to 444 (KKREFYRDKK…PQLLEPHRST (82 aa)) lie on the Cytoplasmic side of the membrane. Residues 378–444 (GLEDSSQEAE…PQLLEPHRST (67 aa)) form a disordered region.

It belongs to the P2X receptor family. As to quaternary structure, functional P2XRs are organized as homomeric and heteromeric trimers. Homotrimer. Forms heterotrimer with P2RX1. In terms of tissue distribution, expressed at high levels in brain and immune system.

It localises to the cell membrane. The enzyme catalyses Na(+)(in) = Na(+)(out). The catalysed reaction is Ca(2+)(in) = Ca(2+)(out). It catalyses the reaction chloride(in) = chloride(out). Its activity is regulated as follows. Activated by ATP. Slowly desensitizing. Sensitive to the ATP agonist alpha/beta-methylene-ATP. ATP-gated nonselective transmembrane cation channel permeable to potassium, sodium and calcium. Unlike other P2RX receptors, the P2X5 receptor is also permeable to chloride. May play a supporting role in the inflammatory response. Functionally, non-functional. The sequence is that of P2X purinoceptor 5 from Homo sapiens (Human).